The chain runs to 226 residues: ATP synthase F(0) complex subunit a (226 aa).

A run of 6 helical transmembrane segments spans residues 6–26 (FASF…IILF), 68–88 (WSLM…LGLL), 97–117 (QLSM…VMGF), 138–158 (IPML…ALAV), 164–184 (ITAG…LSTI), and 189–209 (TLII…VALI).

The protein belongs to the ATPase A chain family. In terms of assembly, component of the ATP synthase complex composed at least of ATP5F1A/subunit alpha, ATP5F1B/subunit beta, ATP5MC1/subunit c (homooctomer), MT-ATP6/subunit a, MT-ATP8/subunit 8, ATP5ME/subunit e, ATP5MF/subunit f, ATP5MG/subunit g, ATP5MK/subunit k, ATP5MJ/subunit j, ATP5F1C/subunit gamma, ATP5F1D/subunit delta, ATP5F1E/subunit epsilon, ATP5PF/subunit F6, ATP5PB/subunit b, ATP5PD/subunit d, ATP5PO/subunit OSCP. ATP synthase complex consists of a soluble F(1) head domain (subunits alpha(3) and beta(3)) - the catalytic core - and a membrane F(0) domain - the membrane proton channel (subunits c, a, 8, e, f, g, k and j). These two domains are linked by a central stalk (subunits gamma, delta, and epsilon) rotating inside the F1 region and a stationary peripheral stalk (subunits F6, b, d, and OSCP). Interacts with DNAJC30; interaction is direct.

The protein localises to the mitochondrion inner membrane. It carries out the reaction H(+)(in) = H(+)(out). Functionally, subunit a, of the mitochondrial membrane ATP synthase complex (F(1)F(0) ATP synthase or Complex V) that produces ATP from ADP in the presence of a proton gradient across the membrane which is generated by electron transport complexes of the respiratory chain. ATP synthase complex consist of a soluble F(1) head domain - the catalytic core - and a membrane F(1) domain - the membrane proton channel. These two domains are linked by a central stalk rotating inside the F(1) region and a stationary peripheral stalk. During catalysis, ATP synthesis in the catalytic domain of F(1) is coupled via a rotary mechanism of the central stalk subunits to proton translocation. With the subunit c (ATP5MC1), forms the proton-conducting channel in the F(0) domain, that contains two crucial half-channels (inlet and outlet) that facilitate proton movement from the mitochondrial intermembrane space (IMS) into the matrix. Protons are taken up via the inlet half-channel and released through the outlet half-channel, following a Grotthuss mechanism. This is ATP synthase F(0) complex subunit a from Pan paniscus (Pygmy chimpanzee).